A 101-amino-acid chain; its full sequence is Small ribosomal subunit protein bS18c (101 aa).

Positions 82–101 are disordered; the sequence is KQFERAESTPRTPGPRTRNK.

It belongs to the bacterial ribosomal protein bS18 family. As to quaternary structure, part of the 30S ribosomal subunit.

It localises to the plastid. The protein localises to the chloroplast. The sequence is that of Small ribosomal subunit protein bS18c from Platanus occidentalis (Sycamore).